A 363-amino-acid chain; its full sequence is MMNGFGIKNNGEFYSVSLQFGAHKLCGSGRFSNVYCGQMISPIEKEVAVKNVWSDTETRHLATSEYPEIQILSKLFHPAISNLLYFYSRNANDKVINCLVLDYLPQDLARLRDQGVKFDVLDAKLYTFQLFCAISHLTSKNIVHMDIKPQNVVMDRMAGRLKLADFGNARRLETNEKTGSAYQVTRFYRPPELLFGCEKFTASIDIWSATCVAFELFANRVLFKGKDTKDQIVLITGVFGYPTDDDIKSIGVKRPRVARKDARGIETFTSKMLDSEIYDFMKATLKIDPKKRKSAIDVLKMPLFDILRSSPPKKRSNGVEMPNLASYTEMHHKREPETEVVADIQTTEKAEKESDSTNEELED.

The 285-residue stretch at 20–304 (FGAHKLCGSG…AIDVLKMPLF (285 aa)) folds into the Protein kinase domain. Residues 26 to 34 (CGSGRFSNV) and K50 each bind ATP. The Proton acceptor role is filled by D146. The tract at residues 311–363 (PPKKRSNGVEMPNLASYTEMHHKREPETEVVADIQTTEKAEKESDSTNEELED) is disordered. The span at 346 to 355 (TTEKAEKESD) shows a compositional bias: basic and acidic residues.

It belongs to the protein kinase superfamily. Ser/Thr protein kinase family. Expressed during multiple stages of spermatogenesis, in males and hermaphrodites (at protein level).

The protein resides in the cytoplasm. It localises to the cell projection. The protein localises to the pseudopodium. It catalyses the reaction L-seryl-[protein] + ATP = O-phospho-L-seryl-[protein] + ADP + H(+). It carries out the reaction L-threonyl-[protein] + ATP = O-phospho-L-threonyl-[protein] + ADP + H(+). May be an autophosphorylating tyrosine kinase, a bifunctional (serine/tyrosine-specific) protein kinase, or a serine kinase that is a substrate for an associated tyrosine kinase. Acting in concert with putative serine/threonine-protein kinase gskl-2, required for sister chromatid segregation and spermatid budding during male meiosis. Plays a role in regulating female meiosis II, together with gskl-2. Involved in sperm pseudopod formation and function, together with gskl-2. The protein is Putative serine/threonine-protein kinase gskl-1 of Caenorhabditis elegans.